The following is a 263-amino-acid chain: Small ribosomal subunit protein uS2 (263 aa).

This sequence belongs to the universal ribosomal protein uS2 family. In terms of assembly, component of the small ribosomal subunit. Mature ribosomes consist of a small (40S) and a large (60S) subunit. The 40S subunit contains about 33 different proteins and 1 molecule of RNA (18S). The 60S subunit contains about 49 different proteins and 3 molecules of RNA (25S, 5.8S and 5S). Interacts with RPS21.

It is found in the cytoplasm. In terms of biological role, required for the assembly and/or stability of the 40S ribosomal subunit. Required for the processing of the 20S rRNA-precursor to mature 18S rRNA in a late step of the maturation of 40S ribosomal subunits. In Vairimorpha ceranae (strain BRL01) (Microsporidian parasite), this protein is Small ribosomal subunit protein uS2.